The following is a 202-amino-acid chain: Protein lin-28 homolog A (202 aa).

Disordered regions lie at residues 1-33 and 100-128; these read MPPA…GSFH and SLQV…RSKG. Over residues 18–29 the composition is skewed to acidic residues; that stretch reads EEEEAASSEEDS. Residues 33 to 106 form the CSD domain; the sequence is HGSGVCKWFN…GLESLQVTGP (74 aa). Residues 107-130 form a flexible linker region; that stretch reads GGAPCVGSEKKPKGTQKRRSKGDR. CCHC-type zinc fingers lie at residues 129 to 146 and 151 to 168; these read DRCF…ECQL and KKCH…NCPI. Zn(2+)-binding residues include cysteine 131, cysteine 134, histidine 139, cysteine 144, cysteine 153, cysteine 156, histidine 161, and cysteine 166. Positions 170-202 are disordered; sequence AQQLSPGSQGKSTTSTGEEEDMSHTPLLPESTD. Residues 171–185 show a composition bias toward polar residues; it reads QQLSPGSQGKSTTST. Serine 174 is subject to Phosphoserine.

It belongs to the lin-28 family. As to quaternary structure, monomer.

It is found in the cytoplasm. Its subcellular location is the rough endoplasmic reticulum. It localises to the P-body. The protein resides in the stress granule. The protein localises to the nucleus. It is found in the nucleolus. Functionally, RNA-binding protein that inhibits processing of pre-let-7 miRNAs and regulates translation of mRNAs that control developmental timing, pluripotency and metabolism. Seems to recognize a common structural G-quartet (G4) feature in its miRNA and mRNA targets. 'Translational enhancer' that drives specific mRNAs to polysomes and increases the efficiency of protein synthesis. Its association with the translational machinery and target mRNAs results in an increased number of initiation events per molecule of mRNA and, indirectly, in mRNA stabilization. Suppressor of microRNA (miRNA) biogenesis, including that of let-7. Binds specific target miRNA precursors (pre-miRNAs), recognizing an 5'-GGAG-3' motif found in their terminal loop, and recruits uridylyltransferase. This results in the terminal uridylation of target pre-miRNAs. Uridylated pre-miRNAs fail to be processed by Dicer and undergo degradation. Localized to the periendoplasmic reticulum area, binds to a large number of spliced mRNAs and inhibits the translation of mRNAs destined for the ER, reducing the synthesis of transmembrane proteins, ER or Golgi lumen proteins, and secretory proteins. Binds to and enhances the translation of mRNAs for several metabolic enzymes, increasing glycolysis and oxidative phosphorylation. Which, with the let-7 repression may enhance tissue repair in adult tissue. This is Protein lin-28 homolog A (lin28a) from Danio rerio (Zebrafish).